The chain runs to 295 residues: 4-hydroxy-tetrahydrodipicolinate synthase (295 aa).

Thr45 provides a ligand contact to pyruvate. Tyr131 serves as the catalytic Proton donor/acceptor. Lys159 acts as the Schiff-base intermediate with substrate in catalysis. Val202 is a pyruvate binding site.

The protein belongs to the DapA family. As to quaternary structure, homotetramer; dimer of dimers.

The protein localises to the cytoplasm. It carries out the reaction L-aspartate 4-semialdehyde + pyruvate = (2S,4S)-4-hydroxy-2,3,4,5-tetrahydrodipicolinate + H2O + H(+). It functions in the pathway amino-acid biosynthesis; L-lysine biosynthesis via DAP pathway; (S)-tetrahydrodipicolinate from L-aspartate: step 3/4. In terms of biological role, catalyzes the condensation of (S)-aspartate-beta-semialdehyde [(S)-ASA] and pyruvate to 4-hydroxy-tetrahydrodipicolinate (HTPA). The polypeptide is 4-hydroxy-tetrahydrodipicolinate synthase (Methanothrix thermoacetophila (strain DSM 6194 / JCM 14653 / NBRC 101360 / PT) (Methanosaeta thermophila)).